A 273-amino-acid polypeptide reads, in one-letter code: DNA repair protein RecO (273 aa).

The protein belongs to the RecO family.

Involved in DNA repair and RecF pathway recombination. This is DNA repair protein RecO from Mycolicibacterium gilvum (strain PYR-GCK) (Mycobacterium gilvum (strain PYR-GCK)).